The following is a 392-amino-acid chain: Selenide, water dikinase 1 (392 aa).

Ser-2 is subject to N-acetylserine. Cys-31 is a catalytic residue. ATP contacts are provided by residues Lys-32, 67 to 69 (GMD), Asp-87, Asp-110, and 161 to 164 (GGQT). Mg(2+) is bound at residue Asp-69. Asp-110 provides a ligand contact to Mg(2+). Mg(2+) is bound at residue Asp-265.

The protein belongs to the selenophosphate synthase 1 family. Class II subfamily. As to quaternary structure, homodimer. The cofactor is Mg(2+).

The protein localises to the cell membrane. The protein resides in the nucleus membrane. It carries out the reaction hydrogenselenide + ATP + H2O = selenophosphate + AMP + phosphate + 2 H(+). Synthesizes selenophosphate from selenide and ATP. The polypeptide is Selenide, water dikinase 1 (Sephs1) (Mus musculus (Mouse)).